An 896-amino-acid chain; its full sequence is DNA mismatch repair protein MutS (896 aa).

607–614 (GPNMSGKS) contributes to the ATP binding site. The interval 809-835 (ANSVAPNTAASMPVEAADESQPVESET) is disordered.

Belongs to the DNA mismatch repair MutS family.

This protein is involved in the repair of mismatches in DNA. It is possible that it carries out the mismatch recognition step. This protein has a weak ATPase activity. This is DNA mismatch repair protein MutS from Lactiplantibacillus plantarum (strain ATCC BAA-793 / NCIMB 8826 / WCFS1) (Lactobacillus plantarum).